The chain runs to 315 residues: Probable cell division protein WhiA (315 aa).

Positions 280–313 (SLKELGEMLDPPVGKSGINHRLRKIEKIAEELRT) form a DNA-binding region, H-T-H motif.

This sequence belongs to the WhiA family.

In terms of biological role, involved in cell division and chromosome segregation. In Clostridium beijerinckii (strain ATCC 51743 / NCIMB 8052) (Clostridium acetobutylicum), this protein is Probable cell division protein WhiA.